The primary structure comprises 94 residues: Cell division protein FtsB (94 aa).

Topologically, residues 1 to 3 (MRV) are cytoplasmic. Residues 4–21 (FALTLSLLLVWLLYTLMW) form a helical membrane-spanning segment. Topologically, residues 22-94 (GKNGVMDFRA…YRIIGEESRQ (73 aa)) are periplasmic. Residues 33 to 76 (QAEIEVQQQVNANLHLRNQEMFAEIDDLRQGLDAIEERARNELG) adopt a coiled-coil conformation.

Belongs to the FtsB family. As to quaternary structure, part of a complex composed of FtsB, FtsL and FtsQ.

It localises to the cell inner membrane. Essential cell division protein. May link together the upstream cell division proteins, which are predominantly cytoplasmic, with the downstream cell division proteins, which are predominantly periplasmic. This Vibrio cholerae serotype O1 (strain ATCC 39315 / El Tor Inaba N16961) protein is Cell division protein FtsB.